Here is a 25-residue protein sequence, read N- to C-terminus: Caerin-1.9 (25 aa).

Leu25 bears the Leucine amide mark.

This sequence belongs to the frog skin active peptide (FSAP) family. Caerin subfamily. Expressed by the skin dorsal glands.

The protein resides in the secreted. In terms of biological role, antimicrobial peptide. Adopts an alpha helical conformation which can disrupt bacterial membranes. Strongly inhibits the formation of NO by neuronal nitric oxide synthase (nNOS) at micromolar concentrations. Acts by a non-competitive mechanism, probably by binding to calcium/calmodulin and as a consequence blocking calmodulin attachment to nNOS. In Ranoidea chloris (Red-eyed tree frog), this protein is Caerin-1.9.